A 388-amino-acid chain; its full sequence is Paired box protein Pax-5 (388 aa).

A DNA-binding region (paired) is located at residues 15 to 141 (RHGGVNQLGG…SSINRIIRTK (127 aa)). The interval 18–74 (GVNQLGGVFVNGRPLPDVVRQRIVELAHQGVRPCDISRQLRVSHGCVSKILGRYYET) is PAI subdomain. The segment at 93 to 141 (KVVDKIADYKRQNPTMFAWEIRDRLLAERVCDNDTVPSVSSINRIIRTK) is RED subdomain. Residues 143 to 158 (QQPTNQQIPPSNHSIA) are compositionally biased toward polar residues. Disordered regions lie at residues 143–162 (QQPT…STGS) and 191–217 (AETN…PGRD).

First detected in mid-neurula embryos in the folding neural tube. With the completion of neurulation, expression becomes localized to the midbrain/hindbrain boundary (MHB) till at least stage 40. Expression is absent from regions adjacent to the MHB. In tailbuds, weakly and transiently expressed in the developing otic vesicle from stage 21 to stage 27.

It is found in the nucleus. In terms of biological role, probable transcription factor. The chain is Paired box protein Pax-5 from Xenopus laevis (African clawed frog).